The primary structure comprises 976 residues: Probable basic-leucine zipper transcription factor Q (976 aa).

2 coiled-coil regions span residues 57–110 (AIDS…QYQQ) and 136–287 (QQQQ…QQQQ). The interval 104 to 128 (YQQQYQQPYTTPSPPDQIDYNQQLS) is disordered. Composition is skewed to polar residues over residues 374–385 (TNFNGTNNSTPN) and 393–411 (KLSS…SPPS). The disordered stretch occupies residues 374 to 499 (TNFNGTNNST…PIDSNGDFDL (126 aa)). Low complexity-rich tracts occupy residues 420–468 (PKNN…FNNN) and 476–490 (STTT…MTSP). The region spanning 504–567 (EKKKSISRIN…GVEVMRPEPE (64 aa)) is the bZIP domain. The interval 505–507 (KKK) is basic motif. A leucine-zipper region spans residues 509-516 (ISRINQNL). Over residues 855–938 (ENQSNNFGNN…VNSNNNNFNN (84 aa)) the composition is skewed to low complexity. The disordered stretch occupies residues 855–957 (ENQSNNFGNN…SADAIPYPST (103 aa)).

This sequence belongs to the bZIP family.

The protein resides in the nucleus. In terms of biological role, probable transcriptional regulator. This is Probable basic-leucine zipper transcription factor Q (bzpQ) from Dictyostelium discoideum (Social amoeba).